The chain runs to 256 residues: tRNA (guanine-N(1)-)-methyltransferase (256 aa).

S-adenosyl-L-methionine contacts are provided by residues glycine 119 and 139-144 (IGDYVV).

This sequence belongs to the RNA methyltransferase TrmD family. As to quaternary structure, homodimer.

It localises to the cytoplasm. It carries out the reaction guanosine(37) in tRNA + S-adenosyl-L-methionine = N(1)-methylguanosine(37) in tRNA + S-adenosyl-L-homocysteine + H(+). Specifically methylates guanosine-37 in various tRNAs. The protein is tRNA (guanine-N(1)-)-methyltransferase of Nitrosospira multiformis (strain ATCC 25196 / NCIMB 11849 / C 71).